The chain runs to 628 residues: tRNA uridine 5-carboxymethylaminomethyl modification enzyme MnmG (628 aa).

Residues 14-19 (GAGHAG), V126, and S181 each bind FAD. An NAD(+)-binding site is contributed by 273-287 (GPRYCPSIEDKVVRF). Q370 provides a ligand contact to FAD.

It belongs to the MnmG family. In terms of assembly, homodimer. Heterotetramer of two MnmE and two MnmG subunits. It depends on FAD as a cofactor.

The protein localises to the cytoplasm. In terms of biological role, NAD-binding protein involved in the addition of a carboxymethylaminomethyl (cmnm) group at the wobble position (U34) of certain tRNAs, forming tRNA-cmnm(5)s(2)U34. This Exiguobacterium sibiricum (strain DSM 17290 / CCUG 55495 / CIP 109462 / JCM 13490 / 255-15) protein is tRNA uridine 5-carboxymethylaminomethyl modification enzyme MnmG.